Here is a 258-residue protein sequence, read N- to C-terminus: Indole-3-glycerol phosphate synthase 2 (258 aa).

The protein belongs to the TrpC family.

The enzyme catalyses 1-(2-carboxyphenylamino)-1-deoxy-D-ribulose 5-phosphate + H(+) = (1S,2R)-1-C-(indol-3-yl)glycerol 3-phosphate + CO2 + H2O. It functions in the pathway amino-acid biosynthesis; L-tryptophan biosynthesis; L-tryptophan from chorismate: step 4/5. In terms of biological role, the function of the second trp operon in S.coelicolor is to produce tryptophan for the biosynthesis of calcium-dependent antibiotic (CDA). This Streptomyces coelicolor (strain ATCC BAA-471 / A3(2) / M145) protein is Indole-3-glycerol phosphate synthase 2 (trpC2).